A 439-amino-acid polypeptide reads, in one-letter code: 26S rRNA (cytosine-C(5))-methyltransferase nsun-5 (439 aa).

3 residues coordinate S-adenosyl-L-methionine: Asp-266, Asp-293, and Asp-313. The active-site Nucleophile is Cys-366.

The protein belongs to the class I-like SAM-binding methyltransferase superfamily. RsmB/NOP family.

It catalyses the reaction a cytidine in 26S rRNA + S-adenosyl-L-methionine = a 5-methylcytidine in 26S rRNA + S-adenosyl-L-homocysteine + H(+). In terms of biological role, S-adenosyl-L-methionine-dependent methyltransferase which methylates the carbon-5 position of cytosine 2381 to 5-methylcytosine (m5C2381) in 26S rRNA. Plays a role in the production of mature 5S, 5.8S, 18S and 26S rRNAs and promotes the processing of the internally transcribed spacer 2 (ITS2), which separates the 5.8S and 26S rRNAs on large pre-rRNA precursors. May play a role in the translation of leucine and proline codons. May play a role in maintaining ribosomal frameshifting in response to osmotic stress. Not required for global translation. The chain is 26S rRNA (cytosine-C(5))-methyltransferase nsun-5 from Caenorhabditis elegans.